Here is a 249-residue protein sequence, read N- to C-terminus: 23S rRNA (guanosine-2'-O-)-methyltransferase RlmB (249 aa).

The S-adenosyl-L-methionine site is built by Gly200, Ile220, and Leu229.

This sequence belongs to the class IV-like SAM-binding methyltransferase superfamily. RNA methyltransferase TrmH family. RlmB subfamily.

Its subcellular location is the cytoplasm. The enzyme catalyses guanosine(2251) in 23S rRNA + S-adenosyl-L-methionine = 2'-O-methylguanosine(2251) in 23S rRNA + S-adenosyl-L-homocysteine + H(+). Specifically methylates the ribose of guanosine 2251 in 23S rRNA. The chain is 23S rRNA (guanosine-2'-O-)-methyltransferase RlmB from Xylella fastidiosa (strain 9a5c).